A 360-amino-acid chain; its full sequence is Photosystem II protein D1 (360 aa).

3 consecutive transmembrane segments (helical) span residues 29 to 46 (YIGW…TATS), 118 to 133 (HFLT…EWEL), and 142 to 156 (WISV…AAAA). His-118 serves as a coordination point for chlorophyll a. Tyr-126 is a binding site for pheophytin a. Asp-170 and Glu-189 together coordinate [CaMn4O5] cluster. Residues 197-218 (FHQLGVAGVFGGSLFSAMHGSL) form a helical membrane-spanning segment. His-198 contributes to the chlorophyll a binding site. A quinone contacts are provided by residues His-215 and 264-265 (SF). His-215 contacts Fe cation. His-272 is a binding site for Fe cation. A helical membrane pass occupies residues 274–288 (FLGLWPVVGIWLTAL). [CaMn4O5] cluster contacts are provided by His-332, Glu-333, Asp-342, and Ala-344. A propeptide spanning residues 345–360 (SGESLPVALTAPAVNG) is cleaved from the precursor.

The protein belongs to the reaction center PufL/M/PsbA/D family. As to quaternary structure, PSII is composed of 1 copy each of membrane proteins PsbA, PsbB, PsbC, PsbD, PsbE, PsbF, PsbH, PsbI, PsbJ, PsbK, PsbL, PsbM, PsbT, PsbX, PsbY, PsbZ, Psb30/Ycf12, at least 3 peripheral proteins of the oxygen-evolving complex and a large number of cofactors. It forms dimeric complexes. The cofactor is The D1/D2 heterodimer binds P680, chlorophylls that are the primary electron donor of PSII, and subsequent electron acceptors. It shares a non-heme iron and each subunit binds pheophytin, quinone, additional chlorophylls, carotenoids and lipids. D1 provides most of the ligands for the Mn4-Ca-O5 cluster of the oxygen-evolving complex (OEC). There is also a Cl(-1) ion associated with D1 and D2, which is required for oxygen evolution. The PSII complex binds additional chlorophylls, carotenoids and specific lipids.. In terms of processing, tyr-161 forms a radical intermediate that is referred to as redox-active TyrZ, YZ or Y-Z. Post-translationally, C-terminally processed by CTPA; processing is essential to allow assembly of the oxygen-evolving complex and thus photosynthetic growth.

It is found in the plastid. It localises to the chloroplast thylakoid membrane. It carries out the reaction 2 a plastoquinone + 4 hnu + 2 H2O = 2 a plastoquinol + O2. Functionally, photosystem II (PSII) is a light-driven water:plastoquinone oxidoreductase that uses light energy to abstract electrons from H(2)O, generating O(2) and a proton gradient subsequently used for ATP formation. It consists of a core antenna complex that captures photons, and an electron transfer chain that converts photonic excitation into a charge separation. The D1/D2 (PsbA/PsbD) reaction center heterodimer binds P680, the primary electron donor of PSII as well as several subsequent electron acceptors. In Porphyra purpurea (Red seaweed), this protein is Photosystem II protein D1.